Consider the following 316-residue polypeptide: Sorting nexin-20 (316 aa).

The interval 1 to 57 is disordered; that stretch reads MASHKHPGSPGWTGPICQDMAGTTPKASAPRPDLPRPGPEDHLEAQGSPSSNSSMTT. At serine 3 the chain carries Phosphoserine. Positions 47–57 are enriched in polar residues; that stretch reads GSPSSNSSMTT. Residues 74-191 enclose the PX domain; that stretch reads VKLLFEIASA…DFLTRPELKE (118 aa). A 1,2-diacyl-sn-glycero-3-phospho-(1D-myo-inositol-3-phosphate) contacts are provided by arginine 116, serine 118, lysine 143, and arginine 157.

This sequence belongs to the sorting nexin family. In terms of assembly, interacts with SELPLG. Interaction with SELPLG is controversial.

The protein localises to the early endosome membrane. Its subcellular location is the cell membrane. The protein resides in the cytoplasm. It localises to the nucleus. Its function is as follows. May play a role in cellular vesicle trafficking. Has been proposed to function as a sorting protein that targets SELPLG into endosomes, but has no effect on SELPLG internalization from the cell surface, or on SELPLG-mediated cell-cell adhesion. The polypeptide is Sorting nexin-20 (SNX20) (Bos taurus (Bovine)).